The chain runs to 471 residues: Variant surface glycoprotein ILTAT 1.21 (471 aa).

The first 21 residues, 1-21 (MLRALLPSTTLALILAGGGHA), serve as a signal peptide directing secretion. N-linked (GlcNAc...) asparagine glycosylation is found at N64 and N405. The tract at residues 406-449 (ATADECPETRCEYDSEKNECRPKKGTETTATGPGERTTPADGKA) is disordered. A compositionally biased stretch (basic and acidic residues) spans 412–431 (PETRCEYDSEKNECRPKKGT). N450 is a glycosylation site (N-linked (GlcNAc...) asparagine). Residue S454 is the site of GPI-anchor amidated serine attachment. Positions 455 to 471 (DSLLIKTSPLWLAFLLF) are cleaved as a propeptide — removed in mature form.

The protein localises to the cell membrane. VSG forms a coat on the surface of the parasite. The trypanosome evades the immune response of the host by expressing a series of antigenically distinct VSGs from an estimated 1000 VSG genes. This Trypanosoma brucei brucei protein is Variant surface glycoprotein ILTAT 1.21.